We begin with the raw amino-acid sequence, 190 residues long: Peptidyl-tRNA hydrolase (190 aa).

Residue Tyr14 coordinates tRNA. The active-site Proton acceptor is His19. TRNA contacts are provided by Tyr64 and Asn66.

The protein belongs to the PTH family. In terms of assembly, monomer.

Its subcellular location is the cytoplasm. It catalyses the reaction an N-acyl-L-alpha-aminoacyl-tRNA + H2O = an N-acyl-L-amino acid + a tRNA + H(+). Hydrolyzes ribosome-free peptidyl-tRNAs (with 1 or more amino acids incorporated), which drop off the ribosome during protein synthesis, or as a result of ribosome stalling. Its function is as follows. Catalyzes the release of premature peptidyl moieties from peptidyl-tRNA molecules trapped in stalled 50S ribosomal subunits, and thus maintains levels of free tRNAs and 50S ribosomes. The protein is Peptidyl-tRNA hydrolase of Rhodopirellula baltica (strain DSM 10527 / NCIMB 13988 / SH1).